The sequence spans 570 residues: Protein FAM227A (570 aa).

The segment covering leucine 87 to valine 99 has biased composition (basic and acidic residues). Disordered stretches follow at residues leucine 87–serine 112, proline 336–alanine 374, and lysine 519–proline 570. Tyrosine 343 carries the phosphotyrosine modification. Residues proline 345–glutamine 362 show a composition bias toward polar residues. Phosphoserine occurs at positions 348 and 349. Composition is skewed to basic and acidic residues over residues asparagine 363 to alanine 374 and serine 540 to histidine 562.

This sequence belongs to the FAM227 family.

The protein is Protein FAM227A (FAM227A) of Homo sapiens (Human).